Consider the following 245-residue polypeptide: Small ribosomal subunit protein uS2 (245 aa).

This sequence belongs to the universal ribosomal protein uS2 family.

The protein is Small ribosomal subunit protein uS2 of Pseudomonas putida (strain W619).